Here is a 91-residue protein sequence, read N- to C-terminus: Acyl-CoA-binding domain-containing protein 1 (91 aa).

One can recognise an ACB domain in the interval 3 to 88; that stretch reads LQEDFEQYAE…VKQLLEEAAA (86 aa). Residues Lys-15, 30–34, Lys-56, and Tyr-75 each bind an acyl-CoA; that span reads YGLYK.

This sequence belongs to the ACBP family. Highly expressed in leaves. Expressed at low levels in roots and seeds.

It is found in the cytoplasm. Its subcellular location is the cytosol. Binds medium- and long-chain acyl-CoA esters with high affinity. Can interact in vitro with palmitoyl-CoA, oleoyl-CoA, linoleoyl-CoA and linolenoyl-CoA. Binds phosphatidic acid (PA) and phosphatidylcholine (PC) in vitro. May play a role in the biosynthesis of phospholipids. The polypeptide is Acyl-CoA-binding domain-containing protein 1 (Oryza sativa subsp. japonica (Rice)).